Consider the following 311-residue polypeptide: MSNSIVIQTNSTVIEDMKQQYKHSLSPKTPQGGIFMAKVPSCTITAYKSGKVMFQGGRAEAEASRWQTVSQTPKTAVKRSVDSHRYAPPASIGTMSIVGSDEVGTGDFFGPMTVVAVYVDAKQIPLLKELGVKDSKNLNDEQITAIAKQLLHVVPYSSLVLHNEKYNELFDKGNNQGKLKALLHNKAITNLLAKMAPIKPEGVLIDQFTQPDTYYKYLAKQKQVQRENVYFATKGESVHLAVAAASILARYSFVKQFNELSKKAGMPLPKGAGKQVDIAAAKLIQKLGKERLPEFVKLHFANTEKAFRLLK.

An RNase H type-2 domain is found at 95–311 (MSIVGSDEVG…NTEKAFRLLK (217 aa)). A divalent metal cation contacts are provided by D101, E102, and D206.

Belongs to the RNase HII family. RnhC subfamily. Mn(2+) serves as cofactor. The cofactor is Mg(2+).

The protein localises to the cytoplasm. The catalysed reaction is Endonucleolytic cleavage to 5'-phosphomonoester.. Endonuclease that specifically degrades the RNA of RNA-DNA hybrids. This chain is Ribonuclease HIII, found in Bacillus cereus (strain AH187).